We begin with the raw amino-acid sequence, 975 residues long: Protein cramped (975 aa).

5 disordered regions span residues 1–37 (MEEL…GGGA), 71–111 (QKMK…GSGK), 318–346 (AIFP…PSVA), 403–450 (PVAA…LMKM), and 809–844 (PIDR…QEPG). Residues 7–20 (QPPPPPPLPPPPSS) are compositionally biased toward pro residues. Residues 86–98 (SEREPNKKEEKAA) show a composition bias toward basic and acidic residues. Over residues 100 to 111 (KTPSQLKTGSGK) the composition is skewed to polar residues. One can recognise an SANT domain in the interval 109-173 (SGKTTWTNVE…HYYQTYHKIC (65 aa)). Basic and acidic residues predominate over residues 410-425 (LRTESGSEKRSPETKK). Over residues 815-833 (GTSSGGISSSGSKPDSSMG) the composition is skewed to low complexity.

This sequence belongs to the cramped family.

The protein localises to the nucleus. Its function is as follows. Polycomb group (Pc-G) genes are needed to maintain expression patterns of the homeotic selector genes of the Antennapedia (Antp-C) and Bithorax (Bx-C) complexes, and hence for the maintenance of segmental determination. Can act as a modifier of position effect variegation (PEV). In Drosophila sechellia (Fruit fly), this protein is Protein cramped (crm).